We begin with the raw amino-acid sequence, 746 residues long: Disintegrin and metalloproteinase domain-containing protein 18 (746 aa).

A signal peptide spans 1–16; that stretch reads MFFLLALLTELGRLQA. A propeptide spanning residues 17-183 is cleaved from the precursor; that stretch reads HVGSEGIFLH…QKKNLSKLLP (167 aa). N36, N122, N149, N156, N177, and N294 each carry an N-linked (GlcNAc...) asparagine glycan. Over 177 to 687 the chain is Extracellular; that stretch reads NLSKLLPQYL…EKGYNAHWNN (511 aa). The Peptidase M12B domain maps to 184-381; sequence QYLEIYIIVE…FEAKCLQKLS (198 aa). 4 cysteine pairs are disulfide-bonded: C293–C376, C335–C360, C337–C342, and C450–C471. N-linked (GlcNAc...) asparagine glycosylation is found at N359, N465, N611, and N625. Residues 390–479 enclose the Disintegrin domain; sequence QPVCGNGILE…DCVPDTYALN (90 aa). The EGF-like domain maps to 620 to 654; it reads TGYNCNTTTKCKGKGICNNFGNCQCFPGHKPPDCK. 3 cysteine pairs are disulfide-bonded: C624/C636, C630/C642, and C644/C653. Residues 688 to 708 traverse the membrane as a helical segment; the sequence is WFILSFYIVLPFFIIFTIVIF. The Cytoplasmic portion of the chain corresponds to 709-746; the sequence is KRNEIRKLCNRENTELIHPLYQKAMMWNINIAQNFRSK.

Post-translationally, the prodomain and the metalloprotease-like domain are cleaved during the epididymal maturation of the spermatozoa. Expressed predominantly in adult and prepubertal testis.

Its subcellular location is the membrane. Sperm surface membrane protein that may be involved in spermatogenesis and fertilization. This is a non catalytic metalloprotease-like protein. The sequence is that of Disintegrin and metalloproteinase domain-containing protein 18 (ADAM18) from Macaca fascicularis (Crab-eating macaque).